Consider the following 927-residue polypeptide: DNA mismatch repair protein MutS (927 aa).

Residue 646–653 (GPNMAGKS) coordinates ATP. The disordered stretch occupies residues 904-927 (SAQPGSAEQGESPDKHDEGKNSRG). Residues 915–927 (SPDKHDEGKNSRG) are compositionally biased toward basic and acidic residues.

This sequence belongs to the DNA mismatch repair MutS family.

Its function is as follows. This protein is involved in the repair of mismatches in DNA. It is possible that it carries out the mismatch recognition step. This protein has a weak ATPase activity. In Desulfovibrio desulfuricans (strain ATCC 27774 / DSM 6949 / MB), this protein is DNA mismatch repair protein MutS.